The sequence spans 359 residues: 5-formaminoimidazole-4-carboxamide-1-(beta)-D-ribofuranosyl 5'-monophosphate synthetase (359 aa).

Positions 28 and 95 each coordinate 5-amino-1-(5-phospho-beta-D-ribosyl)imidazole-4-carboxamide. One can recognise an ATP-grasp domain in the interval 115 to 346 (ELMIWETDRD…MGRRIAREIK (232 aa)). Residues 144–206 (PEEI…ANIY) and E228 contribute to the ATP site. N256 contacts 5-amino-1-(5-phospho-beta-D-ribosyl)imidazole-4-carboxamide. Residues E295 and E308 each coordinate Mg(2+).

The protein belongs to the phosphohexose mutase family. The cofactor is Mg(2+). Mn(2+) serves as cofactor.

The catalysed reaction is 5-amino-1-(5-phospho-beta-D-ribosyl)imidazole-4-carboxamide + formate + ATP = 5-formamido-1-(5-phospho-D-ribosyl)imidazole-4-carboxamide + ADP + phosphate. It functions in the pathway purine metabolism; IMP biosynthesis via de novo pathway; 5-formamido-1-(5-phospho-D-ribosyl)imidazole-4-carboxamide from 5-amino-1-(5-phospho-D-ribosyl)imidazole-4-carboxamide (formate route): step 1/1. Its function is as follows. Catalyzes the ATP- and formate-dependent formylation of 5-aminoimidazole-4-carboxamide-1-beta-d-ribofuranosyl 5'-monophosphate (AICAR) to 5-formaminoimidazole-4-carboxamide-1-beta-d-ribofuranosyl 5'-monophosphate (FAICAR) in the absence of folates. In Archaeoglobus fulgidus (strain ATCC 49558 / DSM 4304 / JCM 9628 / NBRC 100126 / VC-16), this protein is 5-formaminoimidazole-4-carboxamide-1-(beta)-D-ribofuranosyl 5'-monophosphate synthetase.